Reading from the N-terminus, the 512-residue chain is Metal transporter Nramp4 (512 aa).

The next 12 membrane-spanning stretches (helical) occupy residues 52–72 (LWLF…PGNL), 80–100 (AIAG…GLLI), 129–149 (MVLW…EVIG), 161–181 (LVPL…FLFL), 189–209 (LEAV…WMFG), 235–255 (AVGI…SALV), 277–297 (IEST…TTVF), 323–343 (YGGG…AAGQ), 371–391 (ALIT…VFDS), 402–422 (WLNV…LCLV), 440–460 (ISWI…VDFF), and 468–488 (ILLV…LYLI).

This sequence belongs to the NRAMP (TC 2.A.55) family. As to expression, expressed in vascular tissues.

The protein resides in the vacuole membrane. Functionally, vacuolar metal transporter involved in intracellular metal homeostasis. Can transport iron (Fe), manganese (Mn) and cadmium (Cd). Regulates metal accumulation under Fe starvation. Acts redundantly with NRAMP3 to mobilize vacuolar Fe and provide sufficient Fe during seed germination. In association with NRAMP3, required for optimal growth and photosynthesis under Mn deficiency. Exports Mn from vacuoles in leaf mesophyll cells, making Mn available for functional photosystem II in chloroplasts. In Arabidopsis thaliana (Mouse-ear cress), this protein is Metal transporter Nramp4 (NRAMP4).